Here is a 327-residue protein sequence, read N- to C-terminus: Biotin synthase (327 aa).

A Radical SAM core domain is found at 49–282 (FNKDKIDLCS…NKVIRLCGGR (234 aa)). Positions 67, 71, and 74 each coordinate [4Fe-4S] cluster. Positions 110, 142, 201, and 277 each coordinate [2Fe-2S] cluster.

It belongs to the radical SAM superfamily. Biotin synthase family. Homodimer. [4Fe-4S] cluster is required as a cofactor. Requires [2Fe-2S] cluster as cofactor.

The enzyme catalyses (4R,5S)-dethiobiotin + (sulfur carrier)-SH + 2 reduced [2Fe-2S]-[ferredoxin] + 2 S-adenosyl-L-methionine = (sulfur carrier)-H + biotin + 2 5'-deoxyadenosine + 2 L-methionine + 2 oxidized [2Fe-2S]-[ferredoxin]. The protein operates within cofactor biosynthesis; biotin biosynthesis; biotin from 7,8-diaminononanoate: step 2/2. Its function is as follows. Catalyzes the conversion of dethiobiotin (DTB) to biotin by the insertion of a sulfur atom into dethiobiotin via a radical-based mechanism. The chain is Biotin synthase from Methanococcus maripaludis (strain C5 / ATCC BAA-1333).